The sequence spans 233 residues: Small ribosomal subunit protein uS2 (233 aa).

The protein belongs to the universal ribosomal protein uS2 family.

This is Small ribosomal subunit protein uS2 from Prochlorococcus marinus (strain MIT 9312).